The chain runs to 84 residues: Large ribosomal subunit protein bL27 (84 aa).

Residues 1 to 27 are disordered; the sequence is MAHKKGQGASRNGRDSKSKRLGVKVGA.

It belongs to the bacterial ribosomal protein bL27 family.

This chain is Large ribosomal subunit protein bL27, found in Chlamydia pneumoniae (Chlamydophila pneumoniae).